The primary structure comprises 279 residues: Pantothenate synthetase (279 aa).

26–33 (MGNLHEGH) provides a ligand contact to ATP. The active-site Proton donor is the H33. Q57 contributes to the (R)-pantoate binding site. Residue Q57 coordinates beta-alanine. 144 to 147 (GKKD) provides a ligand contact to ATP. Q150 contributes to the (R)-pantoate binding site. ATP is bound by residues V173 and 181-184 (LSSR).

Belongs to the pantothenate synthetase family. As to quaternary structure, homodimer.

The protein resides in the cytoplasm. It carries out the reaction (R)-pantoate + beta-alanine + ATP = (R)-pantothenate + AMP + diphosphate + H(+). It participates in cofactor biosynthesis; (R)-pantothenate biosynthesis; (R)-pantothenate from (R)-pantoate and beta-alanine: step 1/1. Functionally, catalyzes the condensation of pantoate with beta-alanine in an ATP-dependent reaction via a pantoyl-adenylate intermediate. This chain is Pantothenate synthetase, found in Burkholderia cenocepacia (strain ATCC BAA-245 / DSM 16553 / LMG 16656 / NCTC 13227 / J2315 / CF5610) (Burkholderia cepacia (strain J2315)).